A 71-amino-acid chain; its full sequence is Small ribosomal subunit protein bS21 (71 aa).

Positions 34–44 (RREHYEKPTSE) are enriched in basic and acidic residues. The segment at 34-71 (RREHYEKPTSERKRKKAAAVKRHAKKLSRDNARRTRLY) is disordered. Residues 45–59 (RKRKKAAAVKRHAKK) show a composition bias toward basic residues. The segment covering 60–71 (LSRDNARRTRLY) has biased composition (basic and acidic residues).

Belongs to the bacterial ribosomal protein bS21 family.

The chain is Small ribosomal subunit protein bS21 from Idiomarina loihiensis (strain ATCC BAA-735 / DSM 15497 / L2-TR).